A 264-amino-acid polypeptide reads, in one-letter code: GTP cyclohydrolase FolE2 (264 aa).

This sequence belongs to the GTP cyclohydrolase IV family.

The catalysed reaction is GTP + H2O = 7,8-dihydroneopterin 3'-triphosphate + formate + H(+). Its pathway is cofactor biosynthesis; 7,8-dihydroneopterin triphosphate biosynthesis; 7,8-dihydroneopterin triphosphate from GTP: step 1/1. Converts GTP to 7,8-dihydroneopterin triphosphate. This Ruthia magnifica subsp. Calyptogena magnifica protein is GTP cyclohydrolase FolE2.